Here is a 28-residue protein sequence, read N- to C-terminus: ACKPKNNLCAITEMAECCSGFCLIYRCS.

3 cysteine pairs are disulfide-bonded: Cys-2/Cys-18, Cys-9/Cys-22, and Cys-17/Cys-27. The residue at position 4 (Pro-4) is a 4-hydroxyproline. Glu-13 and Glu-16 each carry 4-carboxyglutamate. A Serine amide modification is found at Ser-28.

The protein belongs to the conotoxin O1 superfamily. As to expression, expressed by the venom duct.

It localises to the secreted. Functionally, gamma-conotoxins may act on voltage-gated non-specific cation pacemaker channels (HCN). This is Gamma-conotoxin-like de7a from Conasprella delessertii (Sozon's cone).